The primary structure comprises 402 residues: Fugralins biosynthesis cluster protein 2 (402 aa).

5 helical membrane-spanning segments follow: residues 28-48, 109-129, 145-165, 232-252, and 264-284; these read NCLA…CFLL, ILIF…AILV, IFWW…TAIV, VIFG…AVTV, and LAPL…IVCV. Disordered regions lie at residues 312 to 335 and 378 to 402; these read NPNT…TGPK and TQDN…PWGV. A compositionally biased stretch (polar residues) spans 324-334; that stretch reads TKGSQLSSTGP. N-linked (GlcNAc...) asparagine glycosylation occurs at N381.

This sequence belongs to the SAT4 family.

It is found in the membrane. It functions in the pathway secondary metabolite biosynthesis. In terms of biological role, part of the gene cluster that mediates the biosynthesis of the tetraketides fugralins such as linear fugralin A and cyclic fugralin B, volatile compounds that play a role in the asexual reproductive cycle but are not involved in pathogenicity. One of the key features of fugralins is the presence of a double methyl group, which is only rarely encountered in fungal secondary metabolites. As the fugralins cluster does not contain an independent methyltransferase, the PKS FGR1 is probably responsible for adding two methyl groups to the same carbon atom. Fugralin B is similar to fugralin A except for a cyclization between the carboxylic acid C-8 and the alcohol on C-4 resulting in a six membered lactone ring, probably catalyzed by the cyclase FGR4. The exact role of the individual cluster genes remains unknown and further work is needed to unravel the biosynthetic pathway. The chain is Fugralins biosynthesis cluster protein 2 from Gibberella zeae (strain ATCC MYA-4620 / CBS 123657 / FGSC 9075 / NRRL 31084 / PH-1) (Wheat head blight fungus).